We begin with the raw amino-acid sequence, 1013 residues long: Putative DNA polymerase 060R (1013 aa).

This sequence belongs to the DNA polymerase type-B family.

The enzyme catalyses DNA(n) + a 2'-deoxyribonucleoside 5'-triphosphate = DNA(n+1) + diphosphate. Its function is as follows. DNA-directed DNA polymerase involved in viral DNA replication. The polypeptide is Putative DNA polymerase 060R (Dryophytes versicolor (chameleon treefrog)).